Reading from the N-terminus, the 638-residue chain is 1-deoxy-D-xylulose-5-phosphate synthase (638 aa).

Residues histidine 79 and 120 to 122 (GHS) each bind thiamine diphosphate. Aspartate 151 provides a ligand contact to Mg(2+). Residues 152–153 (GA), asparagine 182, tyrosine 291, and glutamate 373 contribute to the thiamine diphosphate site. Asparagine 182 is a Mg(2+) binding site.

This sequence belongs to the transketolase family. DXPS subfamily. Homodimer. Mg(2+) is required as a cofactor. Requires thiamine diphosphate as cofactor.

The catalysed reaction is D-glyceraldehyde 3-phosphate + pyruvate + H(+) = 1-deoxy-D-xylulose 5-phosphate + CO2. Its pathway is metabolic intermediate biosynthesis; 1-deoxy-D-xylulose 5-phosphate biosynthesis; 1-deoxy-D-xylulose 5-phosphate from D-glyceraldehyde 3-phosphate and pyruvate: step 1/1. Functionally, catalyzes the acyloin condensation reaction between C atoms 2 and 3 of pyruvate and glyceraldehyde 3-phosphate to yield 1-deoxy-D-xylulose-5-phosphate (DXP). This is 1-deoxy-D-xylulose-5-phosphate synthase from Xanthomonas oryzae pv. oryzae (strain MAFF 311018).